Here is a 567-residue protein sequence, read N- to C-terminus: Monodechloroaminopyrrolnitrin halogenase PrnC (567 aa).

It functions in the pathway antibiotic biosynthesis. Functionally, involved in the biosynthesis of the antifungal antibiotic pyrrolnitrin. Catalyzes the chlorination of monodechloroaminopyrrolnitrin (MDA) at the 3 position to form aminopyrrolnitrin (APRN). The protein is Monodechloroaminopyrrolnitrin halogenase PrnC (prnC) of Pseudomonas fluorescens.